A 268-amino-acid polypeptide reads, in one-letter code: Tropinone reductase homolog At2g29170 (268 aa).

Position 22–46 (22–46 (LVTGGSKGLGEAVVEELAMLGARVH)) interacts with NADP(+). Ser-155 lines the substrate pocket. The active-site Proton acceptor is Tyr-168.

This sequence belongs to the short-chain dehydrogenases/reductases (SDR) family. SDR65C subfamily.

The protein is Tropinone reductase homolog At2g29170 of Arabidopsis thaliana (Mouse-ear cress).